The sequence spans 287 residues: Beta-lactamase GES-1 (287 aa).

Positions 1–18 are cleaved as a signal peptide; that stretch reads MRFIHALLLAGIAHSAYA. Cysteines 63 and 233 form a disulfide. The Nucleophile; acyl-ester intermediate role is filled by Ser-64. Positions 67, 125, 161, and 232 each coordinate a beta-lactam.

This sequence belongs to the class-A beta-lactamase family. As to quaternary structure, monomer. May form dimers.

It catalyses the reaction a beta-lactam + H2O = a substituted beta-amino acid. With respect to regulation, inhibited by the beta-lactamase-blocking agents clavulanic acid, tazobactam, sulbactam and tazobactam and the carbapenem, imipenem. Inhibition by imipenem may involve Gly-165. Extended-spectrum beta-lactamase (ESBL) which confers resistance to penicillins, as well as first, second, third and fourth-generation cephalosporins. Has ceftazidime-hydrolyzing activity. Inactive against the carbapenems, imipenem, meropenem, ertapenem and doripenem. However, weak hydrolytic activity with respect to imipenem has also been reported. This chain is Beta-lactamase GES-1, found in Klebsiella pneumoniae.